The sequence spans 399 residues: Formate-dependent phosphoribosylglycinamide formyltransferase (399 aa).

Residues 21 to 22 (EL) and Glu81 contribute to the N(1)-(5-phospho-beta-D-ribosyl)glycinamide site. ATP-binding positions include Arg114, Lys156, 161–166 (SSGKGQ), 196–199 (EGFI), and Glu204. An ATP-grasp domain is found at 119 to 314 (RLAAEELGLP…EFELHARAIL (196 aa)). Positions 273 and 285 each coordinate Mg(2+). N(1)-(5-phospho-beta-D-ribosyl)glycinamide-binding positions include Asp292, Lys361, and 368–369 (RR). The tract at residues 370–399 (MGVAVANGESTDQARERAKLAASKVRPTRT) is disordered.

It belongs to the PurK/PurT family. In terms of assembly, homodimer.

The enzyme catalyses N(1)-(5-phospho-beta-D-ribosyl)glycinamide + formate + ATP = N(2)-formyl-N(1)-(5-phospho-beta-D-ribosyl)glycinamide + ADP + phosphate + H(+). Its pathway is purine metabolism; IMP biosynthesis via de novo pathway; N(2)-formyl-N(1)-(5-phospho-D-ribosyl)glycinamide from N(1)-(5-phospho-D-ribosyl)glycinamide (formate route): step 1/1. Its function is as follows. Involved in the de novo purine biosynthesis. Catalyzes the transfer of formate to 5-phospho-ribosyl-glycinamide (GAR), producing 5-phospho-ribosyl-N-formylglycinamide (FGAR). Formate is provided by PurU via hydrolysis of 10-formyl-tetrahydrofolate. The protein is Formate-dependent phosphoribosylglycinamide formyltransferase of Dechloromonas aromatica (strain RCB).